The chain runs to 269 residues: Arginine and glutamate-rich protein 1-B (269 aa).

Basic residues predominate over residues 1–57; it reads MGRSRSRSSSRSKHSKTSKHSKKRSRSRSRSRDRERKRRSKSRESKRNRRRESRSRS. Positions 1–70 are necessary and sufficient for RNA binding; the sequence is MGRSRSRSSS…TATSRRDRER (70 aa). Disordered stretches follow at residues 1–109 and 233–269; these read MGRS…MERQ and RMKL…KASE. 3 stretches are compositionally biased toward basic and acidic residues: residues 64 to 80, 89 to 109, and 233 to 249; these read SRRD…RIDI, SAVD…MERQ, and RMKL…EEQK. Residues 71–269 are necessary and sufficient for transcriptional regulation; sequence AASPPERIDI…KLSFSLKASE (199 aa).

It belongs to the ARGLU1 family.

It is found in the nucleus. Its subcellular location is the nucleus speckle. The protein localises to the chromosome. Functionally, dual function regulator of gene expression; regulator of transcription and modulator of alternative splicing. General coactivator of nuclear receptor-induced gene expression. In Danio rerio (Zebrafish), this protein is Arginine and glutamate-rich protein 1-B (arglu1b).